A 149-amino-acid polypeptide reads, in one-letter code: Ribonuclease pancreatic (149 aa).

Residues 1–25 (MGLEKSFILFPLLILVLGWVQSSLG) form the signal peptide. 2 residues coordinate substrate: Lys-32 and Arg-35. The active-site Proton acceptor is His-37. 4 disulfide bridges follow: Cys-51–Cys-109, Cys-65–Cys-120, Cys-83–Cys-135, and Cys-90–Cys-97. N-linked (GlcNAc...) asparagine glycosylation occurs at Asn-59. 66 to 70 (KPVNT) contacts substrate. Asn-87 carries N-linked (GlcNAc...) asparagine glycosylation. Residues Lys-91 and Arg-110 each coordinate substrate. Catalysis depends on His-144, which acts as the Proton donor.

This sequence belongs to the pancreatic ribonuclease family. Monomer. Interacts with and forms tight 1:1 complexes with RNH1. Dimerization of two such complexes may occur. Interaction with RNH1 inhibits this protein. In terms of tissue distribution, pancreas.

It localises to the secreted. The catalysed reaction is an [RNA] containing cytidine + H2O = an [RNA]-3'-cytidine-3'-phosphate + a 5'-hydroxy-ribonucleotide-3'-[RNA].. It carries out the reaction an [RNA] containing uridine + H2O = an [RNA]-3'-uridine-3'-phosphate + a 5'-hydroxy-ribonucleotide-3'-[RNA].. In terms of biological role, endonuclease that catalyzes the cleavage of RNA on the 3' side of pyrimidine nucleotides. Acts on single-stranded and double-stranded RNA. The chain is Ribonuclease pancreatic (RNASE1) from Abrothrix jelskii (Jelski's altiplano mouse).